Consider the following 310-residue polypeptide: AT-hook motif nuclear-localized protein 15 (310 aa).

Disordered stretches follow at residues Val-15 to Pro-112 and Glu-239 to Tyr-310. Composition is skewed to polar residues over residues Ser-31–Arg-41 and Thr-51–Glu-67. A DNA-binding region (a.T hook) is located at residues Arg-88 to Lys-100. The segment covering Pro-94–Pro-104 has biased composition (low complexity). Positions Pro-112–Glu-251 constitute a PPC domain. Over residues Gly-301–Tyr-310 the composition is skewed to pro residues.

Its subcellular location is the nucleus. Its function is as follows. Transcription factor that specifically binds AT-rich DNA sequences related to the nuclear matrix attachment regions (MARs). Binds the DNA sequence GNFEI (GA-negative feedback element I) in the GA3OX1 promoter. Negatively regulates plant innate immunity (PTI) to pathogens through the down-regulation of the PAMP-triggered FRK1 expression. In Arabidopsis thaliana (Mouse-ear cress), this protein is AT-hook motif nuclear-localized protein 15.